A 491-amino-acid polypeptide reads, in one-letter code: Cytochrome P450 2F2 (491 aa).

Residue Cys436 participates in heme binding.

It belongs to the cytochrome P450 family. The cofactor is heme.

It localises to the endoplasmic reticulum membrane. Its subcellular location is the microsome membrane. Functionally, involved in the regio- and stereoselective transformation of naphthalene to trans-1R-hydroxy-2R-glutathionyl-1,2-dihydronaphthalene in the presence of glutathione and glutathione S-transferases. It specifically catalyzes the production of a very reactive and potentially toxic intermediate, the 2R,2S arene oxide, that is associated with necrosis of the unciliated bronchiolar epithelial cells or club cells in lung. The protein is Cytochrome P450 2F2 (Cyp2f2) of Rattus norvegicus (Rat).